The primary structure comprises 1412 residues: DNA-directed RNA polymerase subunit beta' (1412 aa).

Zn(2+)-binding residues include Cys-71, Cys-73, Cys-86, and Cys-89. Residues Asp-461, Asp-463, and Asp-465 each contribute to the Mg(2+) site. Zn(2+)-binding residues include Cys-815, Cys-889, Cys-896, and Cys-899.

Belongs to the RNA polymerase beta' chain family. In terms of assembly, the RNAP catalytic core consists of 2 alpha, 1 beta, 1 beta' and 1 omega subunit. When a sigma factor is associated with the core the holoenzyme is formed, which can initiate transcription. Mg(2+) is required as a cofactor. The cofactor is Zn(2+).

The catalysed reaction is RNA(n) + a ribonucleoside 5'-triphosphate = RNA(n+1) + diphosphate. DNA-dependent RNA polymerase catalyzes the transcription of DNA into RNA using the four ribonucleoside triphosphates as substrates. This Actinobacillus pleuropneumoniae serotype 5b (strain L20) protein is DNA-directed RNA polymerase subunit beta'.